The sequence spans 1002 residues: Transposase for transposon gamma-delta (1002 aa).

Belongs to the transposase 7 family.

Its function is as follows. Required for transposition of transposon Tn1000. The sequence is that of Transposase for transposon gamma-delta (tnpA) from Escherichia coli (strain K12).